Reading from the N-terminus, the 215-residue chain is Large ribosomal subunit protein uL3 (215 aa).

Positions 136-155 (GVSISHRSHGSTGQRQDPGK) are disordered. N5-methylglutamine is present on Q151.

Belongs to the universal ribosomal protein uL3 family. In terms of assembly, part of the 50S ribosomal subunit. Forms a cluster with proteins L14 and L19. In terms of processing, methylated by PrmB.

Its function is as follows. One of the primary rRNA binding proteins, it binds directly near the 3'-end of the 23S rRNA, where it nucleates assembly of the 50S subunit. In Rickettsia typhi (strain ATCC VR-144 / Wilmington), this protein is Large ribosomal subunit protein uL3.